Reading from the N-terminus, the 1020-residue chain is DNA-directed RNA polymerase 2, chloroplastic/mitochondrial (1020 aa).

The disordered stretch occupies residues 314-336; that stretch reads KKQKAEKDKQKEDGEHVTQEQEK. Active-site residues include Asp-721, Lys-796, and Asp-953.

This sequence belongs to the phage and mitochondrial RNA polymerase family. The highest levels of expression are detected in the mature leaves. The level of expression is lowest in the cotyledons.

It is found in the plastid. The protein resides in the chloroplast. The protein localises to the mitochondrion. It catalyses the reaction RNA(n) + a ribonucleoside 5'-triphosphate = RNA(n+1) + diphosphate. Its function is as follows. DNA-dependent RNA polymerase catalyzes the transcription of DNA into RNA using the four ribonucleoside triphosphates as substrates. This is DNA-directed RNA polymerase 2, chloroplastic/mitochondrial (RPOT2) from Nicotiana sylvestris (Wood tobacco).